The primary structure comprises 426 residues: Gamma-glutamyl phosphate reductase (426 aa).

This sequence belongs to the gamma-glutamyl phosphate reductase family.

It localises to the cytoplasm. It carries out the reaction L-glutamate 5-semialdehyde + phosphate + NADP(+) = L-glutamyl 5-phosphate + NADPH + H(+). It functions in the pathway amino-acid biosynthesis; L-proline biosynthesis; L-glutamate 5-semialdehyde from L-glutamate: step 2/2. Its function is as follows. Catalyzes the NADPH-dependent reduction of L-glutamate 5-phosphate into L-glutamate 5-semialdehyde and phosphate. The product spontaneously undergoes cyclization to form 1-pyrroline-5-carboxylate. The chain is Gamma-glutamyl phosphate reductase from Sorangium cellulosum (strain So ce56) (Polyangium cellulosum (strain So ce56)).